A 527-amino-acid polypeptide reads, in one-letter code: Inosine-5'-monophosphate dehydrogenase (527 aa).

CBS domains are found at residues 121 to 183 and 184 to 240; these read FILD…VTAV and MSTD…PLAS. Residues 277–279 and 327–329 each bind NAD(+); these read DSS and GMG. K(+) contacts are provided by G329 and G331. S332 is an IMP binding site. C334 contacts K(+). The active-site Thioimidate intermediate is the C334. IMP contacts are provided by residues 367–369 and 390–391; these read DGG and GS. The Proton acceptor role is filled by R440. Position 452 (Q452) interacts with IMP. The disordered stretch occupies residues 506 to 527; that stretch reads ASAQTEGNVHGLHSHEKKLYSS. K(+) is bound by residues E511 and G512. Basic and acidic residues predominate over residues 518–527; the sequence is HSHEKKLYSS.

The protein belongs to the IMPDH/GMPR family. In terms of assembly, homotetramer. It depends on K(+) as a cofactor.

The protein resides in the cytoplasm. The enzyme catalyses IMP + NAD(+) + H2O = XMP + NADH + H(+). It functions in the pathway purine metabolism; XMP biosynthesis via de novo pathway; XMP from IMP: step 1/1. With respect to regulation, mycophenolic acid (MPA) is a non-competitive inhibitor that prevents formation of the closed enzyme conformation by binding to the same site as the amobile flap. In contrast, mizoribine monophosphate (MZP) is a competitive inhibitor that induces the closed conformation. MPA is a potent inhibitor of mammalian IMPDHs but a poor inhibitor of the bacterial enzymes. MZP is a more potent inhibitor of bacterial IMPDH. In terms of biological role, catalyzes the conversion of inosine 5'-phosphate (IMP) to xanthosine 5'-phosphate (XMP), the first committed and rate-limiting step in the de novo synthesis of guanine nucleotides, and therefore plays an important role in the regulation of cell growth. Part of the gene cluster that mediates the biosynthesis of mycophenolic acid (MPA), the first isolated antibiotic natural product in the world. Does not play a role in the biosynthesis of MPA, but is involved in self resistance to MPA, since MPA acts as an inhibitor of IMP dehydrogenases. The protein is Inosine-5'-monophosphate dehydrogenase of Penicillium brevicompactum.